The primary structure comprises 313 residues: Ribosomal RNA small subunit methyltransferase H (313 aa).

Residues 35–37 (GGH), Asp55, Phe80, Asp102, and Gln109 each bind S-adenosyl-L-methionine.

This sequence belongs to the methyltransferase superfamily. RsmH family.

It localises to the cytoplasm. It catalyses the reaction cytidine(1402) in 16S rRNA + S-adenosyl-L-methionine = N(4)-methylcytidine(1402) in 16S rRNA + S-adenosyl-L-homocysteine + H(+). Specifically methylates the N4 position of cytidine in position 1402 (C1402) of 16S rRNA. This is Ribosomal RNA small subunit methyltransferase H from Shewanella loihica (strain ATCC BAA-1088 / PV-4).